We begin with the raw amino-acid sequence, 138 residues long: ATP synthase epsilon chain, chloroplastic (138 aa).

Belongs to the ATPase epsilon chain family. In terms of assembly, F-type ATPases have 2 components, CF(1) - the catalytic core - and CF(0) - the membrane proton channel. CF(1) has five subunits: alpha(3), beta(3), gamma(1), delta(1), epsilon(1). CF(0) has three main subunits: a, b and c.

It is found in the plastid. Its subcellular location is the chloroplast thylakoid membrane. Its function is as follows. Produces ATP from ADP in the presence of a proton gradient across the membrane. This is ATP synthase epsilon chain, chloroplastic from Staurastrum punctulatum (Green alga).